A 318-amino-acid polypeptide reads, in one-letter code: tRNA methyltransferase 10 homolog B (318 aa).

The segment covering 1 to 10 (MDCKSEESAQ) has biased composition (basic and acidic residues). Residues 1–105 (MDCKSEESAQ…DPGNGTCPQH (105 aa)) are disordered. The span at 52 to 63 (SPANSAVWSSKN) shows a compositional bias: polar residues. The segment covering 64 to 83 (MQRKQRHWERIVSSKKSKRK) has biased composition (basic residues). The stretch at 72–93 (ERIVSSKKSKRKQERERRKAKR) forms a coiled coil. The segment covering 84 to 96 (QERERRKAKRAED) has biased composition (basic and acidic residues). Residues 114–311 (TKEKLLEAKH…KGVSPGKGYV (198 aa)) enclose the SAM-dependent MTase TRM10-type domain.

The protein belongs to the class IV-like SAM-binding methyltransferase superfamily. TRM10 family.

The catalysed reaction is guanosine(9) in tRNA + S-adenosyl-L-methionine = N(1)-methylguanosine(9) in tRNA + S-adenosyl-L-homocysteine + H(+). In terms of biological role, S-adenosyl-L-methionine-dependent guanine N(1)-methyltransferase that catalyzes the formation of N(1)-methylguanine at position 9 (m1G9) in tRNAs. Probably not able to catalyze formation of N(1)-methyladenine at position 9 (m1A9) in tRNAs. The sequence is that of tRNA methyltransferase 10 homolog B (Trmt10b) from Mus musculus (Mouse).